A 1742-amino-acid polypeptide reads, in one-letter code: Unconventional myosin-Vc (1742 aa).

Alanine 2 bears the N-acetylalanine mark. The Myosin N-terminal SH3-like domain maps to 8 to 62 (TQYNRVWIPDPEEVWKSAEIAKDYRVGDKVLRLLLEDGTELDYSVNPESLPPLRN). A Myosin motor domain is found at 67 to 753 (VGENDLTALS…QVAYLEKLRL (687 aa)). ATP is bound at residue 161–168 (GESGAGKT). The tract at residues 632-654 (LYLLMETLNATTPHYVRCIKPND) is actin-binding. IQ domains follow at residues 756-779 (LRQS…FLRE), 780-806 (RRAA…VALK), 807-829 (EAWA…LYQL), 830-854 (IRMA…RKML), and 855-884 (EEHK…FVLN). Residues 884 to 1351 (NIQLTYRVQR…SKTIGKANDV (468 aa)) are a coiled coil. Residues 1421–1697 (NSTINGIKQV…VRKVQALLNS (277 aa)) enclose the Dilute domain.

It belongs to the TRAFAC class myosin-kinesin ATPase superfamily. Myosin family. As to expression, expressed chiefly in non-neuronal tissues. Particularly abundant in epithelial and glandular tissues including pancreas, prostate, mammary, stomach, colon and lung.

In terms of biological role, may be involved in transferrin trafficking. Likely to power actin-based membrane trafficking in many physiologically crucial tissues. This chain is Unconventional myosin-Vc (MYO5C), found in Homo sapiens (Human).